The primary structure comprises 345 residues: Ubiquinone biosynthesis O-methyltransferase, mitochondrial (345 aa).

Residues 1 to 86 (MWRGGRLSSR…TYRSSWKKLY (86 aa)) constitute a mitochondrion transit peptide. R124 serves as a coordination point for S-adenosyl-L-methionine. 2 positions are modified to N6-acetyllysine: K143 and K149. S-adenosyl-L-methionine-binding residues include G154 and D175. K196 is modified (N6-acetyllysine). An S-adenosyl-L-methionine-binding site is contributed by S222. 3 residues coordinate Mg(2+): E223, E226, and H227.

It belongs to the class I-like SAM-binding methyltransferase superfamily. UbiG/COQ3 family. In terms of assembly, component of a multi-subunit COQ enzyme complex, composed of at least COQ3, COQ4, COQ5, COQ6, COQ7 and COQ9. It depends on Mg(2+) as a cofactor.

The protein resides in the mitochondrion inner membrane. The enzyme catalyses 3,4-dihydroxy-5-(all-trans-decaprenyl)benzoate + S-adenosyl-L-methionine = 4-hydroxy-3-methoxy-5-(all-trans-decaprenyl)benzoate + S-adenosyl-L-homocysteine + H(+). The catalysed reaction is a 3-demethylubiquinone + S-adenosyl-L-methionine = a ubiquinone + S-adenosyl-L-homocysteine. It carries out the reaction 3-demethylubiquinol-10 + S-adenosyl-L-methionine = ubiquinol-10 + S-adenosyl-L-homocysteine + H(+). It participates in cofactor biosynthesis; ubiquinone biosynthesis. Functionally, O-methyltransferase required for two non-consecutive steps during ubiquinone biosynthesis. Catalyzes the 2 O-methylation of 3,4-dihydroxy-5-(all-trans-decaprenyl)benzoic acid into 4-hydroxy-3-methoxy-5-(all-trans-decaprenyl)benzoic acid. Also catalyzes the last step of ubiquinone biosynthesis by mediating methylation of 3-demethylubiquinone into ubiquinone. Also able to mediate the methylation of 3-demethylubiquinol-10 into ubiquinol-10. This chain is Ubiquinone biosynthesis O-methyltransferase, mitochondrial, found in Rattus norvegicus (Rat).